Reading from the N-terminus, the 329-residue chain is Acetyl-coenzyme A carboxylase carboxyl transferase subunit alpha (329 aa).

The CoA carboxyltransferase C-terminal domain occupies 40-294; the sequence is QLETLAARRR…REALERNLSE (255 aa).

This sequence belongs to the AccA family. Acetyl-CoA carboxylase is a heterohexamer composed of biotin carboxyl carrier protein (AccB), biotin carboxylase (AccC) and two subunits each of ACCase subunit alpha (AccA) and ACCase subunit beta (AccD).

It localises to the cytoplasm. It carries out the reaction N(6)-carboxybiotinyl-L-lysyl-[protein] + acetyl-CoA = N(6)-biotinyl-L-lysyl-[protein] + malonyl-CoA. It participates in lipid metabolism; malonyl-CoA biosynthesis; malonyl-CoA from acetyl-CoA: step 1/1. Functionally, component of the acetyl coenzyme A carboxylase (ACC) complex. First, biotin carboxylase catalyzes the carboxylation of biotin on its carrier protein (BCCP) and then the CO(2) group is transferred by the carboxyltransferase to acetyl-CoA to form malonyl-CoA. This Synechococcus sp. (strain CC9311) protein is Acetyl-coenzyme A carboxylase carboxyl transferase subunit alpha.